A 337-amino-acid chain; its full sequence is Sideroflexin-4 (337 aa).

An N-acetylserine modification is found at S2. 3 consecutive transmembrane segments (helical) span residues A111–I131, S133–G153, and S165–V185. K197 is modified (N6-acetyllysine). Transmembrane regions (helical) follow at residues A251–F271 and V293–I313.

The protein belongs to the sideroflexin family.

It is found in the mitochondrion inner membrane. Its function is as follows. Mitochondrial amino-acid transporter. Does not act as a serine transporter: not able to mediate transport of serine into mitochondria. The sequence is that of Sideroflexin-4 from Homo sapiens (Human).